The following is a 338-amino-acid chain: Ferredoxin--NADP reductase (338 aa).

Residues Asp38, Gln46, Tyr51, Val91, Phe125, Asp291, and Thr331 each contribute to the FAD site.

Belongs to the ferredoxin--NADP reductase type 2 family. In terms of assembly, homodimer. The cofactor is FAD.

It catalyses the reaction 2 reduced [2Fe-2S]-[ferredoxin] + NADP(+) + H(+) = 2 oxidized [2Fe-2S]-[ferredoxin] + NADPH. In Orientia tsutsugamushi (strain Boryong) (Rickettsia tsutsugamushi), this protein is Ferredoxin--NADP reductase.